The following is a 148-amino-acid chain: Deoxyuridine 5'-triphosphate nucleotidohydrolase (148 aa).

Substrate-binding positions include R68–G70, N81, T85–D87, and K95.

This sequence belongs to the dUTPase family. Mg(2+) serves as cofactor.

It carries out the reaction dUTP + H2O = dUMP + diphosphate + H(+). It participates in pyrimidine metabolism; dUMP biosynthesis; dUMP from dCTP (dUTP route): step 2/2. In terms of biological role, this enzyme is involved in nucleotide metabolism: it produces dUMP, the immediate precursor of thymidine nucleotides and it decreases the intracellular concentration of dUTP so that uracil cannot be incorporated into DNA. The chain is Deoxyuridine 5'-triphosphate nucleotidohydrolase from Thermoanaerobacter sp. (strain X514).